The primary structure comprises 314 residues: 2-oxo-3-(phosphooxy)propyl 3-oxoalkanoate synthase (314 aa).

This sequence belongs to the AfsA family.

The catalysed reaction is a medium-chain 3-oxoacyl-[ACP] + dihydroxyacetone phosphate = a (4-alkanoyl-5-oxo-2,5-dihydrofuran-3-yl)methyl phosphate + holo-[ACP] + H2O. Involved of the biosynthesis of S.coelicolor butanolide 1 (SCB1), a gamma-butyrolactone that triggers antibiotic production. This is 2-oxo-3-(phosphooxy)propyl 3-oxoalkanoate synthase from Streptomyces coelicolor (strain ATCC BAA-471 / A3(2) / M145).